The primary structure comprises 114 residues: Class I hydrophobin SC16 (114 aa).

The first 17 residues, 1 to 17, serve as a signal peptide directing secretion; the sequence is MRFFATLVLALPALAMA. Intrachain disulfides connect Cys-33–Cys-93, Cys-40–Cys-87, Cys-41–Cys-74, and Cys-94–Cys-107. The N-linked (GlcNAc...) asparagine glycan is linked to Asn-42.

The protein belongs to the fungal hydrophobin family. Self-assembles to form functional amyloid fibrils called rodlets. Self-assembly into fibrillar rodlets occurs spontaneously at hydrophobic:hydrophilic interfaces and the rodlets further associate laterally to form amphipathic monolayers.

Its subcellular location is the secreted. It localises to the cell wall. In terms of biological role, aerial growth, conidiation, and dispersal of filamentous fungi in the environment rely upon a capability of their secreting small amphipathic proteins called hydrophobins (HPBs) with low sequence identity. Class I can self-assemble into an outermost layer of rodlet bundles on aerial cell surfaces, conferring cellular hydrophobicity that supports fungal growth, development and dispersal; whereas Class II form highly ordered films at water-air interfaces through intermolecular interactions but contribute nothing to the rodlet structure. This is Class I hydrophobin SC16 from Schizophyllum commune (strain H4-8 / FGSC 9210) (Split gill fungus).